The following is a 907-amino-acid chain: MTIQPAVPTSPTNAAPEAARVTPMMEQYLEIKAANPGLLLFYRMGDFYELFFEDAEIASCTLGITLTKRGKHQGADIPMCGVPVERSDDYLHRLIAAGHRVAVCEQMEDPAAARRRGNKSVVRRDVVRLITPGTLTEDTLLDARANNYLLALARARASSGGNRIALAWIDISTAEFIVTECSTGELAATLARINPNEVIVSDALYGDPDMAALLRELPSVTPLTRDVFDGATAERRLCDYFAVATMDGLSAMSWLEATAAAAAVTYVDRTQIGKRPPLSPPSREAAGSTMAIDPATRANLELTRTLAGERRGSLLDAIDRTMTAAGSRLLAQRLAAPLTDIAAIARRLDAVAAFTSDSAARDDIRTILRTAPDMSRALARLSVGRGGPRDLAGLRDGIMAADRTLARLSALPDPPQDIVAAMQALRRPSRELARELGEALAENLPLMKRDGGFAREGYEPTLDEARKLRDDSRLVVAAMQARYTEETGVKTLKIRHNNVLGYFVEVTAQHGDKLTSAPLNATFIHRQTLAGQVRFTTSELGEIEARIANAGDRALGLELEIFDRLAAVVVEAGDDLRAAAHAFAQLDVAASLAKLATDENFTRPEVDASLGFAIEGGRHPVVEQALKRAGQPFIANACDLSPGPGQTSGQIWLLTGPNMAGKSTFLRQNALIALMAQIGSFVPATRARIGMIDRLFSRVGAADDLARGRSTFMVEMVETAVILNQASERALVILDEIGRGTATFDGLSIAWAAIEHLHEANKCRALFATHYHELTALSAKLPRLFNATVRVKEWHGEVVFLHEVLPGAADRSYGIQVAKLAGLPPSVVARAKSVLAKLEAQDRGSTVRALVDDLPLFAVPSRAADESAPPGEAAPLIEALKALHPDEMSPREALEALYALKAKLPKP.

Residue 656 to 663 participates in ATP binding; it reads GPNMAGKS.

This sequence belongs to the DNA mismatch repair MutS family.

This protein is involved in the repair of mismatches in DNA. It is possible that it carries out the mismatch recognition step. This protein has a weak ATPase activity. The polypeptide is DNA mismatch repair protein MutS (Nitrobacter hamburgensis (strain DSM 10229 / NCIMB 13809 / X14)).